Consider the following 767-residue polypeptide: V-set and immunoglobulin domain-containing protein 10-like 2 (767 aa).

A signal peptide spans M1–G28. Ig-like domains are found at residues P34–T140, P150–D234, and P242–Q324. Cystine bridges form between C56/C122, C169/C217, and C268/C308. The N-linked (GlcNAc...) asparagine glycan is linked to N376. 2 Ig-like domains span residues P399 to E499 and P501 to E593. Disulfide bonds link C435/C481 and C522/C577. A Fibronectin type-III domain is found at A599–F699. Residues N602 and N628 are each glycosylated (N-linked (GlcNAc...) asparagine). Residues A704–F724 traverse the membrane as a helical segment. A disordered region spans residues P735 to D754. Polar residues predominate over residues T739–D754.

The protein resides in the membrane. This chain is V-set and immunoglobulin domain-containing protein 10-like 2, found in Homo sapiens (Human).